We begin with the raw amino-acid sequence, 329 residues long: 4-hydroxy-3-methylbut-2-enyl diphosphate reductase (329 aa).

Cysteine 27 serves as a coordination point for [4Fe-4S] cluster. The (2E)-4-hydroxy-3-methylbut-2-enyl diphosphate site is built by histidine 56 and histidine 89. Dimethylallyl diphosphate is bound by residues histidine 56 and histidine 89. Residues histidine 56 and histidine 89 each coordinate isopentenyl diphosphate. Position 111 (cysteine 111) interacts with [4Fe-4S] cluster. Histidine 139 is a binding site for (2E)-4-hydroxy-3-methylbut-2-enyl diphosphate. Histidine 139 lines the dimethylallyl diphosphate pocket. Histidine 139 contacts isopentenyl diphosphate. Glutamate 141 functions as the Proton donor in the catalytic mechanism. Threonine 179 is a (2E)-4-hydroxy-3-methylbut-2-enyl diphosphate binding site. Cysteine 209 contacts [4Fe-4S] cluster. Residues serine 237, serine 238, asparagine 239, and serine 281 each coordinate (2E)-4-hydroxy-3-methylbut-2-enyl diphosphate. The dimethylallyl diphosphate site is built by serine 237, serine 238, asparagine 239, and serine 281. The isopentenyl diphosphate site is built by serine 237, serine 238, asparagine 239, and serine 281.

It belongs to the IspH family. Requires [4Fe-4S] cluster as cofactor.

The enzyme catalyses isopentenyl diphosphate + 2 oxidized [2Fe-2S]-[ferredoxin] + H2O = (2E)-4-hydroxy-3-methylbut-2-enyl diphosphate + 2 reduced [2Fe-2S]-[ferredoxin] + 2 H(+). It catalyses the reaction dimethylallyl diphosphate + 2 oxidized [2Fe-2S]-[ferredoxin] + H2O = (2E)-4-hydroxy-3-methylbut-2-enyl diphosphate + 2 reduced [2Fe-2S]-[ferredoxin] + 2 H(+). It functions in the pathway isoprenoid biosynthesis; dimethylallyl diphosphate biosynthesis; dimethylallyl diphosphate from (2E)-4-hydroxy-3-methylbutenyl diphosphate: step 1/1. It participates in isoprenoid biosynthesis; isopentenyl diphosphate biosynthesis via DXP pathway; isopentenyl diphosphate from 1-deoxy-D-xylulose 5-phosphate: step 6/6. Catalyzes the conversion of 1-hydroxy-2-methyl-2-(E)-butenyl 4-diphosphate (HMBPP) into a mixture of isopentenyl diphosphate (IPP) and dimethylallyl diphosphate (DMAPP). Acts in the terminal step of the DOXP/MEP pathway for isoprenoid precursor biosynthesis. In Methylibium petroleiphilum (strain ATCC BAA-1232 / LMG 22953 / PM1), this protein is 4-hydroxy-3-methylbut-2-enyl diphosphate reductase.